The sequence spans 466 residues: Trigger factor (466 aa).

A PPIase FKBP-type domain is found at 162 to 243 (GDVVSIDLSA…VRSVKERELP (82 aa)). The interval 428 to 466 (GNTIDTSEFFGKRVSAGEAEEAEPADEGAARAASDEATT) is disordered. The span at 457–466 (ARAASDEATT) shows a compositional bias: low complexity.

This sequence belongs to the FKBP-type PPIase family. Tig subfamily.

It localises to the cytoplasm. It carries out the reaction [protein]-peptidylproline (omega=180) = [protein]-peptidylproline (omega=0). Its function is as follows. Involved in protein export. Acts as a chaperone by maintaining the newly synthesized protein in an open conformation. Functions as a peptidyl-prolyl cis-trans isomerase. The sequence is that of Trigger factor from Mycobacterium tuberculosis (strain ATCC 25177 / H37Ra).